A 435-amino-acid polypeptide reads, in one-letter code: GTPase Obg (435 aa).

Residues 6 to 164 (ADFVDRVKIF…RWLELELKIL (159 aa)) enclose the Obg domain. The OBG-type G domain occupies 165–335 (ADVGLVGYPN…LVSKLASIVR (171 aa)). Residues 171-178 (GYPNVGKS), 196-200 (FTTLI), 217-220 (DIPG), 287-290 (NKID), and 316-318 (SAV) contribute to the GTP site. The Mg(2+) site is built by Ser-178 and Thr-198. Positions 357–435 (RRLPEKFHLE…IGDFEFEYRE (79 aa)) constitute an OCT domain.

The protein belongs to the TRAFAC class OBG-HflX-like GTPase superfamily. OBG GTPase family. Monomer. Mg(2+) is required as a cofactor.

It localises to the cytoplasm. Functionally, an essential GTPase which binds GTP, GDP and possibly (p)ppGpp with moderate affinity, with high nucleotide exchange rates and a fairly low GTP hydrolysis rate. Plays a role in control of the cell cycle, stress response, ribosome biogenesis and in those bacteria that undergo differentiation, in morphogenesis control. The protein is GTPase Obg of Thermotoga maritima (strain ATCC 43589 / DSM 3109 / JCM 10099 / NBRC 100826 / MSB8).